The chain runs to 479 residues: Ribosomal RNA small subunit methyltransferase F (479 aa).

S-adenosyl-L-methionine is bound by residues Ala125–Lys131, Glu149, Asp176, and Asp194. Cys247 acts as the Nucleophile in catalysis.

This sequence belongs to the class I-like SAM-binding methyltransferase superfamily. RsmB/NOP family.

Its subcellular location is the cytoplasm. The catalysed reaction is cytidine(1407) in 16S rRNA + S-adenosyl-L-methionine = 5-methylcytidine(1407) in 16S rRNA + S-adenosyl-L-homocysteine + H(+). Functionally, specifically methylates the cytosine at position 1407 (m5C1407) of 16S rRNA. The sequence is that of Ribosomal RNA small subunit methyltransferase F from Citrobacter koseri (strain ATCC BAA-895 / CDC 4225-83 / SGSC4696).